The primary structure comprises 549 residues: Polymorphic pseudokinase ROP5 (549 aa).

The N-terminal stretch at 1–24 (MATKLARLATWLVLVGCLLWRAGA) is a signal peptide. One can recognise a Protein kinase domain in the interval 234 to 527 (LKLVEPLRVG…LEAMETPEFL (294 aa)). Arg241, Asp244, Arg245, Ser246, Lys263, Met337, Pro338, Ala340, Asp343, and Asp393 together coordinate ATP. An ADP-binding site is contributed by Asp244. ADP-binding residues include Ser246, Lys263, Met337, Pro338, and Ala340. Asp393 is an ADP binding site. Positions 393 and 407 each coordinate Mg(2+). The N-linked (GlcNAc...) asparagine glycan is linked to Asn434. A disulfide bond links Cys458 and Cys492.

It belongs to the protein kinase superfamily. Ser/Thr protein kinase family. In terms of assembly, component of a complex at least composed of ROP18 and ROP5. Interacts with GRA7. Interacts with ROP17. Interacts with mouse IRGA6/IIGP1; the interaction results in inhibition of IRGA6/IIGP1 GTPase activity and/or oligomerization.

It is found in the secreted. The protein localises to the parasitophorous vacuole. The protein resides in the cytoplasmic vesicle. Its subcellular location is the secretory vesicle. It localises to the rhoptry. Pseudokinase. Essential for virulence in the type I lineage. Mediates parasite survival in mouse monocytes. Required for the parasite ability to resist mouse innate immune effectors triggered by the IFN-gamma (IFNG). Reduces the accumulation of mouse IRGA6 (IIGP1) and IRGB6 (TGTP1/TGTP2), immunity-related GTPases (IRGs) that protect mice from infection by certain intracellular pathogens, on the parasitophorous vacuole and IRG-mediated killing of parasites by mouse cells. Regulates the activity of ROP18, an active kinase that targets IRGs to prevent IRG-mediated parasite killing by mouse cells. Acts as an allosteric inhibitor of mouse IRGA6 (IIGP1). Does not affect IFN-gamma (IFNG)-mediated parasite killing in human cells that do not possess the large variety of IRGs. This is Polymorphic pseudokinase ROP5 from Toxoplasma gondii.